Reading from the N-terminus, the 469-residue chain is Alpha,alpha-trehalose-phosphate synthase [UDP-forming] (469 aa).

Positions 87 and 141 each coordinate D-glucose 6-phosphate. UDP is bound by residues Arg279 and Lys284. UDP-alpha-D-glucose contacts are provided by Arg279 and Lys284. Arg317 is a binding site for D-glucose 6-phosphate. Residue 378–386 coordinates UDP-alpha-D-glucose; that stretch reads DGMNLVSYE. Position 382–386 (382–386) interacts with UDP; the sequence is LVSYE.

This sequence belongs to the glycosyltransferase 20 family.

The enzyme catalyses D-glucose 6-phosphate + UDP-alpha-D-glucose = alpha,alpha-trehalose 6-phosphate + UDP + H(+). The protein operates within carbohydrate biosynthesis. In terms of biological role, synthase catalytic subunit of the trehalose synthase complex that catalyzes the production of trehalose from glucose-6-phosphate and UDP-alpha-D-glucose in a two step process. The disaccharide trehalose serves as a storage carbohydrate that is mobilized during spore germination. This Yarrowia lipolytica (strain CLIB 122 / E 150) (Yeast) protein is Alpha,alpha-trehalose-phosphate synthase [UDP-forming].